The primary structure comprises 194 residues: Cysteine and glycine-rich protein 3 (194 aa).

The interaction with TCAP stretch occupies residues 1-5; sequence MPNWG. The LIM zinc-binding 1 domain maps to 10–61; it reads CGACDKTVYHAEEIQCNGRSFHKTCFHCMACRKALDSTTVAAHESEIYCKVC. The Nuclear localization signal signature appears at 64–69; the sequence is RKYGPK. The segment at 94–105 is interaction with CLF2; sequence QSPKPARAATTS. Phosphoserine occurs at positions 95, 111, and 153. An LIM zinc-binding 2 domain is found at 120–171; it reads CPRCGKSVYAAEKVMGGGKPWHKTCFPCAICGKSLESTNVTDKDGELYCKVC.

In terms of assembly, self-associates. Oligomeric in the cytoplasm and monomeric in the nucleus. Homooligomers preferentially form along the actin cytoskeleton. Interacts with TCAP, ACTN2 and NRAP. Interacts with LDHD, SPTB, MYOD1, MYOG, MYF6. Interacts with GLRX3 (via C-terminus); GLRX3 and calcineurin compete for interaction with CSRP3. Interacts with CFL2; the stoichiometry influences F-actin depolymerization and possibly two molecules of CFL2 can interact with one molecule of CSRP3 resulting in the highest functional impact; the interaction is stronger with phosphorylated CFL2. Phosphorylated by PKC/PRKCA. In terms of tissue distribution, high in striated muscle and adult heart.

Its subcellular location is the nucleus. It is found in the cytoplasm. The protein resides in the cytoskeleton. It localises to the myofibril. The protein localises to the sarcomere. Its subcellular location is the z line. Functionally, positive regulator of myogenesis. Acts as a cofactor for myogenic bHLH transcription factors such as MYOD1, and probably MYOG and MYF6. Enhances the DNA-binding activity of the MYOD1:TCF3 isoform E47 complex and may promote formation of a functional MYOD1:TCF3 isoform E47:MEF2A complex involved in myogenesis. Plays a crucial and specific role in the organization of cytosolic structures in cardiomyocytes. Could play a role in mechanical stretch sensing. May be a scaffold protein that promotes the assembly of interacting proteins at Z-line structures. It is essential for calcineurin anchorage to the Z line. Required for stress-induced calcineurin-NFAT activation. The role in regulation of cytoskeleton dynamics by association with CFL2 is reported conflictingly. Proposed to contribute to the maintenance of muscle cell integrity through an actin-based mechanism. Can directly bind to actin filaments, cross-link actin filaments into bundles without polarity selectivity and protect them from dilution- and cofilin-mediated depolymerization; the function seems to involve its self-association. In vitro can inhibit PKC/PRKCA activity. Proposed to be involved in cardiac stress signaling by down-regulating excessive PKC/PRKCA signaling. The polypeptide is Cysteine and glycine-rich protein 3 (Csrp3) (Rattus norvegicus (Rat)).